The chain runs to 428 residues: Peptidase B (428 aa).

Lysine 195 and aspartate 200 together coordinate Mn(2+). The active site involves lysine 207. Positions 218, 277, and 279 each coordinate Mn(2+). The active site involves arginine 281.

Belongs to the peptidase M17 family. In terms of assembly, homohexamer. It depends on Mn(2+) as a cofactor.

It localises to the cytoplasm. It catalyses the reaction Release of an N-terminal amino acid, Xaa, from a peptide or arylamide. Xaa is preferably Glu or Asp but may be other amino acids, including Leu, Met, His, Cys and Gln.. Probably plays an important role in intracellular peptide degradation. The sequence is that of Peptidase B from Klebsiella pneumoniae (strain 342).